A 172-amino-acid chain; its full sequence is Ferritin-2 heavy chain (172 aa).

The region spanning 8-157 (QSFATECENA…DYLTETQRVG (150 aa)) is the Ferritin-like diiron domain. 5 residues coordinate Fe cation: glutamate 25, glutamate 60, histidine 63, glutamate 105, and glutamine 139.

The protein belongs to the ferritin family. As to quaternary structure, oligomer of 24 subunits. The functional molecule forms a roughly spherical shell with a diameter of 12 nm and contains a central cavity into which the insoluble mineral iron core is deposited.

The catalysed reaction is 4 Fe(2+) + O2 + 4 H(+) = 4 Fe(3+) + 2 H2O. Its function is as follows. Stores iron in a soluble, non-toxic, readily available form. Important for iron homeostasis. Has ferroxidase activity. Iron is taken up in the ferrous form and deposited as ferric hydroxides after oxidation. This is Ferritin-2 heavy chain (SCM-2) from Schistosoma mansoni (Blood fluke).